We begin with the raw amino-acid sequence, 421 residues long: Probable pectate lyase C (421 aa).

Residues 1–19 form the signal peptide; it reads MQPLHTLLALLPLCRSTTA. Residues Asn-164 and Asn-201 are each glycosylated (N-linked (GlcNAc...) asparagine). The active site involves Arg-204. The 36-residue stretch at 257–292 folds into the EF-hand domain; sequence NENFHGYVENNYYDPDQDGTLNGNELGVSSSNYGGM. Ca(2+)-binding residues include Asp-270, Asp-272, Asp-274, Thr-276, and Glu-281. Residues 353 to 376 are disordered; that stretch reads DFGGVGDLDGGETPTDTDGDGIPD. Positions 367-376 are enriched in acidic residues; it reads TDTDGDGIPD.

Belongs to the polysaccharide lyase 1 family. Ca(2+) is required as a cofactor.

It localises to the secreted. It catalyses the reaction Eliminative cleavage of (1-&gt;4)-alpha-D-galacturonan to give oligosaccharides with 4-deoxy-alpha-D-galact-4-enuronosyl groups at their non-reducing ends.. Functionally, pectinolytic enzyme consist of four classes of enzymes: pectin lyase, polygalacturonase, pectin methylesterase and rhamnogalacturonase. Among pectinolytic enzymes, pectin lyase is the most important in depolymerization of pectin, since it cleaves internal glycosidic bonds of highly methylated pectins. Favors pectate, the anion, over pectin, the methyl ester. The sequence is that of Probable pectate lyase C (plyC) from Emericella nidulans (strain FGSC A4 / ATCC 38163 / CBS 112.46 / NRRL 194 / M139) (Aspergillus nidulans).